The chain runs to 342 residues: Dihydroorotase (342 aa).

Positions 13 and 15 each coordinate Zn(2+). Substrate contacts are provided by residues 15 to 17 (HLR) and N41. Zn(2+) is bound by residues K98, H135, and H173. At K98 the chain carries N6-carboxylysine. H135 is a binding site for substrate. L218 provides a ligand contact to substrate. D246 contributes to the Zn(2+) binding site. D246 is a catalytic residue. Positions 250 and 262 each coordinate substrate.

This sequence belongs to the metallo-dependent hydrolases superfamily. DHOase family. Class II DHOase subfamily. In terms of assembly, homodimer. It depends on Zn(2+) as a cofactor.

It carries out the reaction (S)-dihydroorotate + H2O = N-carbamoyl-L-aspartate + H(+). The protein operates within pyrimidine metabolism; UMP biosynthesis via de novo pathway; (S)-dihydroorotate from bicarbonate: step 3/3. Functionally, catalyzes the reversible cyclization of carbamoyl aspartate to dihydroorotate. The polypeptide is Dihydroorotase (Vibrio vulnificus (strain YJ016)).